Consider the following 250-residue polypeptide: Pre-protein VI (250 aa).

A propeptide spanning residues 1–33 (MEDINFASLAPRHGSRPFMGNWQDIGTSNMSGG) is cleaved from the precursor. An amphipathic alpha-helix essential for membrane lytic activity region spans residues 34–54 (AFSWGSLWSGIKNFGSTVKNY). The interval 36–53 (SWGSLWSGIKNFGSTVKN) is involved in endosomal membrane lysis. Positions 48 to 74 (GSTVKNYGSKAWNSSTGQMLRDKLKEQ) are interaction with hexon protein. The Nuclear export signal motif lies at 67–76 (LRDKLKEQNF). The interval 103 to 148 (INSKLDPRPPVEEPPPAVETVSPEGRGEKRPRPDREETLVTQIDEP) is disordered. S124 is subject to Phosphoserine; by host. Residues 127–140 (GRGEKRPRPDREET) show a composition bias toward basic and acidic residues. A Nuclear localization signal motif is present at residues 131 to 135 (KRPRP). T143 carries the phosphothreonine; by host modification. The short motif at 148–151 (PPSY) is the PPXY motif element. Positions 231–242 (STLNSIVGLGVQ) match the Nuclear export signal motif. Positions 233 to 239 (LNSIVGL) are interaction with hexon protein. A binds to importin alpha/beta, involved in hexon nuclear import region spans residues 240-250 (GVQSLKRRRCF). Positions 245 to 248 (KRRR) match the Nuclear localization signal motif.

This sequence belongs to the adenoviridae protein VI family. As to quaternary structure, interacts with hexon protein; this interaction allows nuclear import of hexon trimers and possibly pre-capsid assembly. Interacts (via C-terminal NLS) with importin alpha/beta. Interacts (via PPxY motif) with host NEDD4 ubiquitine ligase; this interaction might play a role in virus intracellular transport during entry. Part of a complex composed of the core-capsid bridging protein, the endosome lysis protein VI and the hexon-linking protein VIII; these interactions bridge the virus core to the capsid. Interacts with peripentonal hexons; this interaction stabilizes the capsid by gluing two peripentonal hexons together and joining them with an adjacent group-of-nine hexon. In terms of assembly, heterodimer with the viral protease; disulfide-linked. Interacts with the viral protease. Post-translationally, ubiquitinated by Nedd4 following partial capsid disassembly; which might play a role in intracellular virus movement during entry. Contains the major nuclear import and export signals. Proteolytically removed during virion maturation. The processing of the C-terminus turns the precursor into a mature viral structural protein and abrogates its ability to promote hexon import and act as a potential chaperone protein.

It localises to the host nucleus. The protein resides in the host cytoplasm. Its subcellular location is the virion. In terms of biological role, during virus assembly, promotes hexon trimers nuclear import through nuclear pore complexes via an importin alpha/beta-dependent mechanism. By analogy to herpesviruses capsid assembly, might act as a chaperone to promote the formation of the icosahedral capsid. Its function is as follows. Structural component of the virion that provides increased stability to the particle shell through its interaction with the core-capsid bridging protein and the hexon-linking protein VIII. Fibers shedding during virus entry into host cell allows the endosome lysis protein to be exposed as a membrane-lytic peptide. Exhibits pH-independent membrane fragmentation activity and probably mediates viral rapid escape from host endosome via organellar membrane lysis. It is not clear if it then remains partially associated with the capsid and involved in the intracellular microtubule-dependent transport of capsid to the nucleus, or if it is lost during endosomal penetration. Cofactor that activates the viral protease. Binds to viral protease in a 1:1 ratio. The protein is Pre-protein VI of Homo sapiens (Human).